The sequence spans 332 residues: Holliday junction branch migration complex subunit RuvB (332 aa).

The large ATPase domain (RuvB-L) stretch occupies residues 1–181 (MARILDNDVM…FGITGHMEYY (181 aa)). ATP-binding positions include L20, R21, G62, K65, T66, T67, 128–130 (EDF), R171, Y181, and R218. Mg(2+) is bound at residue T66. Positions 182-252 (QEKDLTEIVE…ITDRALTMLD (71 aa)) are small ATPAse domain (RuvB-S). The tract at residues 255–332 (REGLDYIDQK…RHLGYPYQNT (78 aa)) is head domain (RuvB-H). Residues R291, R310, R312, and R315 each coordinate DNA.

The protein belongs to the RuvB family. Homohexamer. Forms an RuvA(8)-RuvB(12)-Holliday junction (HJ) complex. HJ DNA is sandwiched between 2 RuvA tetramers; dsDNA enters through RuvA and exits via RuvB. An RuvB hexamer assembles on each DNA strand where it exits the tetramer. Each RuvB hexamer is contacted by two RuvA subunits (via domain III) on 2 adjacent RuvB subunits; this complex drives branch migration. In the full resolvosome a probable DNA-RuvA(4)-RuvB(12)-RuvC(2) complex forms which resolves the HJ.

Its subcellular location is the cytoplasm. The enzyme catalyses ATP + H2O = ADP + phosphate + H(+). Functionally, the RuvA-RuvB-RuvC complex processes Holliday junction (HJ) DNA during genetic recombination and DNA repair, while the RuvA-RuvB complex plays an important role in the rescue of blocked DNA replication forks via replication fork reversal (RFR). RuvA specifically binds to HJ cruciform DNA, conferring on it an open structure. The RuvB hexamer acts as an ATP-dependent pump, pulling dsDNA into and through the RuvAB complex. RuvB forms 2 homohexamers on either side of HJ DNA bound by 1 or 2 RuvA tetramers; 4 subunits per hexamer contact DNA at a time. Coordinated motions by a converter formed by DNA-disengaged RuvB subunits stimulates ATP hydrolysis and nucleotide exchange. Immobilization of the converter enables RuvB to convert the ATP-contained energy into a lever motion, pulling 2 nucleotides of DNA out of the RuvA tetramer per ATP hydrolyzed, thus driving DNA branch migration. The RuvB motors rotate together with the DNA substrate, which together with the progressing nucleotide cycle form the mechanistic basis for DNA recombination by continuous HJ branch migration. Branch migration allows RuvC to scan DNA until it finds its consensus sequence, where it cleaves and resolves cruciform DNA. The protein is Holliday junction branch migration complex subunit RuvB of Streptococcus pyogenes serotype M3 (strain ATCC BAA-595 / MGAS315).